Here is a 60-residue protein sequence, read N- to C-terminus: Large ribosomal subunit protein uL30 (60 aa).

The protein belongs to the universal ribosomal protein uL30 family. As to quaternary structure, part of the 50S ribosomal subunit.

This chain is Large ribosomal subunit protein uL30, found in Flavobacterium johnsoniae (strain ATCC 17061 / DSM 2064 / JCM 8514 / BCRC 14874 / CCUG 350202 / NBRC 14942 / NCIMB 11054 / UW101) (Cytophaga johnsonae).